The following is a 142-amino-acid chain: Small heat shock protein IbpB (142 aa).

The sHSP domain maps to 26-137 (TAEHQAFPPY…APQRIAISDR (112 aa)).

Belongs to the small heat shock protein (HSP20) family. As to quaternary structure, homodimer. Forms homomultimers of about 100-150 subunits at optimal growth temperatures. Conformation changes to oligomers at high temperatures or high ionic concentrations. The decrease in size of the multimers is accompanied by an increase in chaperone activity.

It is found in the cytoplasm. Functionally, associates with aggregated proteins, together with IbpA, to stabilize and protect them from irreversible denaturation and extensive proteolysis during heat shock and oxidative stress. Aggregated proteins bound to the IbpAB complex are more efficiently refolded and reactivated by the ATP-dependent chaperone systems ClpB and DnaK/DnaJ/GrpE. Its activity is ATP-independent. This Enterobacter sp. (strain 638) protein is Small heat shock protein IbpB.